The primary structure comprises 66 residues: Cocaine- and amphetamine-regulated transcript protein (66 aa).

Cystine bridges form between C34–C52 and C40–C60.

This sequence belongs to the CART family.

It localises to the secreted. In terms of biological role, satiety factor closely associated with the actions of leptin and neuropeptide y; this anorectic peptide inhibits both normal and starvation-induced feeding and completely blocks the feeding response induced by neuropeptide Y and regulated by leptin in the hypothalamus. The polypeptide is Cocaine- and amphetamine-regulated transcript protein (CARTPT) (Sus scrofa (Pig)).